We begin with the raw amino-acid sequence, 496 residues long: Ribose import ATP-binding protein RbsA (496 aa).

ABC transporter domains follow at residues 3 to 239 (IVME…VGRE) and 246 to 493 (ERTP…TGGN). 35–42 (GENGAGKS) lines the ATP pocket.

Belongs to the ABC transporter superfamily. Ribose importer (TC 3.A.1.2.1) family. In terms of assembly, the complex is composed of an ATP-binding protein (RbsA), two transmembrane proteins (RbsC) and a solute-binding protein (RbsB).

It localises to the cell membrane. The catalysed reaction is D-ribose(out) + ATP + H2O = D-ribose(in) + ADP + phosphate + H(+). Part of the ABC transporter complex RbsABC involved in ribose import. Responsible for energy coupling to the transport system. The polypeptide is Ribose import ATP-binding protein RbsA (Oceanobacillus iheyensis (strain DSM 14371 / CIP 107618 / JCM 11309 / KCTC 3954 / HTE831)).